The chain runs to 873 residues: E3 ubiquitin-protein ligase UPL5 (873 aa).

A compositionally biased stretch (polar residues) spans 1-19 (MTLSRSSADDSTNNANRSY). Disordered regions lie at residues 1–37 (MTLS…DSSD) and 70–90 (RSGE…SNRP). Residues 95–171 (LQIFVRMMSG…LQLVARMQST (77 aa)) enclose the Ubiquitin-like domain. One can recognise a C-type lectin domain in the interval 272 to 296 (CLPIVLEFCKLLRKVCPDQKLYVTC). One can recognise an HECT domain in the interval 532–873 (SPEALHGGLF…DHVSSSFGKW (342 aa)). Cys-839 (glycyl thioester intermediate) is an active-site residue.

The protein belongs to the UPL family. As to quaternary structure, interacts with WRKY53.

It localises to the cytoplasm. The catalysed reaction is S-ubiquitinyl-[E2 ubiquitin-conjugating enzyme]-L-cysteine + [acceptor protein]-L-lysine = [E2 ubiquitin-conjugating enzyme]-L-cysteine + N(6)-ubiquitinyl-[acceptor protein]-L-lysine.. It functions in the pathway protein modification; protein ubiquitination. In terms of biological role, E3 ubiquitin protein ligase that regulates leaf senescence through ubiquitination and subsequent degradation of WRKY53. The polypeptide is E3 ubiquitin-protein ligase UPL5 (UPL5) (Arabidopsis thaliana (Mouse-ear cress)).